The chain runs to 383 residues: Chaperone protein DnaJ (383 aa).

Positions 5–70 constitute a J domain; that stretch reads DYYELLGVEK…QKRAAYDRFG (66 aa). The CR-type zinc finger occupies 137–215; that stretch reads GKTATVKVPS…CGGSGRTRKE (79 aa). Positions 150, 153, 167, 170, 189, 192, 203, and 206 each coordinate Zn(2+). 4 CXXCXGXG motif repeats span residues 150–157, 167–174, 189–196, and 203–210; these read CEDCKGTG, CSACHGHG, CPTCQGMG, and CRSCGGSG.

This sequence belongs to the DnaJ family. In terms of assembly, homodimer. The cofactor is Zn(2+).

It localises to the cytoplasm. Functionally, participates actively in the response to hyperosmotic and heat shock by preventing the aggregation of stress-denatured proteins and by disaggregating proteins, also in an autonomous, DnaK-independent fashion. Unfolded proteins bind initially to DnaJ; upon interaction with the DnaJ-bound protein, DnaK hydrolyzes its bound ATP, resulting in the formation of a stable complex. GrpE releases ADP from DnaK; ATP binding to DnaK triggers the release of the substrate protein, thus completing the reaction cycle. Several rounds of ATP-dependent interactions between DnaJ, DnaK and GrpE are required for fully efficient folding. Also involved, together with DnaK and GrpE, in the DNA replication of plasmids through activation of initiation proteins. This chain is Chaperone protein DnaJ, found in Paramagnetospirillum magneticum (strain ATCC 700264 / AMB-1) (Magnetospirillum magneticum).